The chain runs to 235 residues: Carbonic anhydrase 1 (235 aa).

The Alpha-carbonic anhydrase domain occupies 1-235; sequence GNKQSPVDIK…LKGRTVKASF (235 aa). Histidine 40 (proton donor/acceptor) is an active-site residue. Zn(2+) contacts are provided by histidine 69, histidine 71, and histidine 94. Substrate is bound by residues threonine 174 and 174-175; that span reads TH.

Belongs to the alpha-carbonic anhydrase family. Zn(2+) is required as a cofactor.

Its subcellular location is the cytoplasm. The enzyme catalyses hydrogencarbonate + H(+) = CO2 + H2O. It carries out the reaction urea = cyanamide + H2O. Inhibited by acetazolamide. Its function is as follows. Catalyzes the reversible hydration of carbon dioxide. Can hydrate cyanamide to urea. The protein is Carbonic anhydrase 1 (CA1) of Oryctolagus cuniculus (Rabbit).